A 767-amino-acid polypeptide reads, in one-letter code: AMP deaminase 3 (767 aa).

Phosphoserine is present on residues Ser-85 and Ser-107. Disordered stretches follow at residues 89–111 and 181–205; these read QMPP…PTTP and LGHP…PLPQ. Positions 317 and 319 each coordinate Zn(2+). Substrate is bound by residues His-319 and 388 to 393; that span reads KFNSKY. Residue His-586 participates in Zn(2+) binding. Glu-589 contributes to the substrate binding site. The active-site Proton acceptor is the His-608. Zn(2+) is bound at residue Asp-663. Residue 664–667 participates in substrate binding; that stretch reads DPMQ.

Belongs to the metallo-dependent hydrolases superfamily. Adenosine and AMP deaminases family. In terms of assembly, homotetramer. The cofactor is Zn(2+).

It catalyses the reaction AMP + H2O + H(+) = IMP + NH4(+). Its pathway is purine metabolism; IMP biosynthesis via salvage pathway; IMP from AMP: step 1/1. AMP deaminase plays a critical role in energy metabolism. The polypeptide is AMP deaminase 3 (Homo sapiens (Human)).